The primary structure comprises 537 residues: 2-succinyl-5-enolpyruvyl-6-hydroxy-3-cyclohexene-1-carboxylate synthase (537 aa).

This sequence belongs to the TPP enzyme family. MenD subfamily. Homodimer. Mg(2+) serves as cofactor. Requires Mn(2+) as cofactor. It depends on thiamine diphosphate as a cofactor.

It catalyses the reaction isochorismate + 2-oxoglutarate + H(+) = 5-enolpyruvoyl-6-hydroxy-2-succinyl-cyclohex-3-ene-1-carboxylate + CO2. Its pathway is quinol/quinone metabolism; 1,4-dihydroxy-2-naphthoate biosynthesis; 1,4-dihydroxy-2-naphthoate from chorismate: step 2/7. The protein operates within quinol/quinone metabolism; menaquinone biosynthesis. Its function is as follows. Catalyzes the thiamine diphosphate-dependent decarboxylation of 2-oxoglutarate and the subsequent addition of the resulting succinic semialdehyde-thiamine pyrophosphate anion to isochorismate to yield 2-succinyl-5-enolpyruvyl-6-hydroxy-3-cyclohexene-1-carboxylate (SEPHCHC). This chain is 2-succinyl-5-enolpyruvyl-6-hydroxy-3-cyclohexene-1-carboxylate synthase, found in Nocardioides sp. (strain ATCC BAA-499 / JS614).